The primary structure comprises 346 residues: tRNA-specific 2-thiouridylase MnmA (346 aa).

6–13 contacts ATP; that stretch reads AMSGGTDS. The active-site Nucleophile is C90. C90 and C187 are disulfide-bonded. ATP is bound at residue G114. Residues 137–139 form an interaction with tRNA region; it reads KDQ. C187 (cysteine persulfide intermediate) is an active-site residue. The interaction with tRNA stretch occupies residues 292–293; the sequence is RY.

Belongs to the MnmA/TRMU family.

The protein resides in the cytoplasm. The enzyme catalyses S-sulfanyl-L-cysteinyl-[protein] + uridine(34) in tRNA + AH2 + ATP = 2-thiouridine(34) in tRNA + L-cysteinyl-[protein] + A + AMP + diphosphate + H(+). Catalyzes the 2-thiolation of uridine at the wobble position (U34) of tRNA, leading to the formation of s(2)U34. The protein is tRNA-specific 2-thiouridylase MnmA of Nitratidesulfovibrio vulgaris (strain DP4) (Desulfovibrio vulgaris).